The sequence spans 146 residues: Small ribosomal subunit protein uS9z (146 aa).

It belongs to the universal ribosomal protein uS9 family.

This Arabidopsis thaliana (Mouse-ear cress) protein is Small ribosomal subunit protein uS9z (RPS16A).